The following is a 335-amino-acid chain: Holliday junction branch migration complex subunit RuvB (335 aa).

Residues 1–183 form a large ATPase domain (RuvB-L) region; that stretch reads MDERIISSET…FGVIDHLEFY (183 aa). Residues Leu22, Arg23, Gly64, Lys67, Thr68, Thr69, 130-132, Arg173, Tyr183, and Arg220 each bind ATP; that span reads EDY. Position 68 (Thr68) interacts with Mg(2+). The interval 184–254 is small ATPAse domain (RuvB-S); that stretch reads TEEQLTEIVL…LAKEALTLLQ (71 aa). The tract at residues 257–335 is head domain (RuvB-H); sequence PRGLDTIDQK…HLGISYEKEV (79 aa). Positions 293, 312, and 317 each coordinate DNA.

Belongs to the RuvB family. Homohexamer. Forms an RuvA(8)-RuvB(12)-Holliday junction (HJ) complex. HJ DNA is sandwiched between 2 RuvA tetramers; dsDNA enters through RuvA and exits via RuvB. An RuvB hexamer assembles on each DNA strand where it exits the tetramer. Each RuvB hexamer is contacted by two RuvA subunits (via domain III) on 2 adjacent RuvB subunits; this complex drives branch migration. In the full resolvosome a probable DNA-RuvA(4)-RuvB(12)-RuvC(2) complex forms which resolves the HJ.

The protein localises to the cytoplasm. It catalyses the reaction ATP + H2O = ADP + phosphate + H(+). Functionally, the RuvA-RuvB-RuvC complex processes Holliday junction (HJ) DNA during genetic recombination and DNA repair, while the RuvA-RuvB complex plays an important role in the rescue of blocked DNA replication forks via replication fork reversal (RFR). RuvA specifically binds to HJ cruciform DNA, conferring on it an open structure. The RuvB hexamer acts as an ATP-dependent pump, pulling dsDNA into and through the RuvAB complex. RuvB forms 2 homohexamers on either side of HJ DNA bound by 1 or 2 RuvA tetramers; 4 subunits per hexamer contact DNA at a time. Coordinated motions by a converter formed by DNA-disengaged RuvB subunits stimulates ATP hydrolysis and nucleotide exchange. Immobilization of the converter enables RuvB to convert the ATP-contained energy into a lever motion, pulling 2 nucleotides of DNA out of the RuvA tetramer per ATP hydrolyzed, thus driving DNA branch migration. The RuvB motors rotate together with the DNA substrate, which together with the progressing nucleotide cycle form the mechanistic basis for DNA recombination by continuous HJ branch migration. Branch migration allows RuvC to scan DNA until it finds its consensus sequence, where it cleaves and resolves cruciform DNA. The polypeptide is Holliday junction branch migration complex subunit RuvB (Listeria innocua serovar 6a (strain ATCC BAA-680 / CLIP 11262)).